Consider the following 323-residue polypeptide: Aspartate carbamoyltransferase catalytic subunit (323 aa).

2 residues coordinate carbamoyl phosphate: R55 and T56. L-aspartate is bound at residue K83. The carbamoyl phosphate site is built by R105, H138, and Q141. The L-aspartate site is built by R181 and R235. Residues G276 and P277 each contribute to the carbamoyl phosphate site.

The protein belongs to the aspartate/ornithine carbamoyltransferase superfamily. ATCase family. As to quaternary structure, heterododecamer (2C3:3R2) of six catalytic PyrB chains organized as two trimers (C3), and six regulatory PyrI chains organized as three dimers (R2).

It carries out the reaction carbamoyl phosphate + L-aspartate = N-carbamoyl-L-aspartate + phosphate + H(+). Its pathway is pyrimidine metabolism; UMP biosynthesis via de novo pathway; (S)-dihydroorotate from bicarbonate: step 2/3. Catalyzes the condensation of carbamoyl phosphate and aspartate to form carbamoyl aspartate and inorganic phosphate, the committed step in the de novo pyrimidine nucleotide biosynthesis pathway. This is Aspartate carbamoyltransferase catalytic subunit from Corynebacterium aurimucosum (strain ATCC 700975 / DSM 44827 / CIP 107346 / CN-1) (Corynebacterium nigricans).